Reading from the N-terminus, the 263-residue chain is MSAQSALSGLGAKLLSGEVEVVDCTGVLGPNTPILQLPPDFAKNTPKVEIHKISEYDSDGPFFAWNWMVLGEHSGTHFDAPHHWITGKDYSDGFTDTLDVQRLIAPVNVIDCSKESAADPDFLLTADLIKAWEAEHGEIGAGEWVVMRTDWDKRAGDEAAFLNADETGPHSPGPTPDAIEYLLSKKIVGWGSQCIGTDAGQAGGMEPPFPAHNLLHRDNCFGLASLANLDKLPAKGAILIAAPLKIERGTGSPIRALALVPKA.

Residue 62-66 participates in substrate binding; it reads FFAWN. Positions 73, 77, and 79 each coordinate Mn(2+). The Proton donor/acceptor role is filled by histidine 83. Histidine 212 contributes to the substrate binding site.

This sequence belongs to the Cyclase 1 superfamily. As to quaternary structure, homodimer. Mn(2+) serves as cofactor.

The catalysed reaction is isatin + H2O = isatinate + H(+). Inhibited by thioisatinate. In terms of biological role, involved in the degradation of the plant hormone indole-3-acetic acid (IAA). Catalyzes the hydrolysis of the cyclic amide bond (lactam) of isatin (1H-indole-2,3-dione) to yield isatinate (2-(2-aminophenyl)-2-oxoacetate). In Roseibium aggregatum (strain ATCC 25650 / DSM 13394 / JCM 20685 / NBRC 16684 / NCIMB 2208 / IAM 12614 / B1) (Stappia aggregata), this protein is Isatin hydrolase.